The chain runs to 262 residues: Ribosome-recycling factor, mitochondrial (262 aa).

Residues methionine 1 to phenylalanine 55 constitute a mitochondrion transit peptide.

It belongs to the RRF family.

It localises to the mitochondrion. Responsible for the disassembly of ribosomes from messenger RNA at the termination of mitochondrial protein biosynthesis. Acts in collaboration with GFM2. Promotes mitochondrial ribosome recycling by dissolution of intersubunit contacts. The sequence is that of Ribosome-recycling factor, mitochondrial from Homo sapiens (Human).